The primary structure comprises 146 residues: D-aminoacyl-tRNA deacylase (146 aa).

Residues 137–138 (GP) carry the Gly-cisPro motif, important for rejection of L-amino acids motif.

It belongs to the DTD family. In terms of assembly, homodimer.

It is found in the cytoplasm. The catalysed reaction is glycyl-tRNA(Ala) + H2O = tRNA(Ala) + glycine + H(+). It catalyses the reaction a D-aminoacyl-tRNA + H2O = a tRNA + a D-alpha-amino acid + H(+). Functionally, an aminoacyl-tRNA editing enzyme that deacylates mischarged D-aminoacyl-tRNAs. Also deacylates mischarged glycyl-tRNA(Ala), protecting cells against glycine mischarging by AlaRS. Acts via tRNA-based rather than protein-based catalysis; rejects L-amino acids rather than detecting D-amino acids in the active site. By recycling D-aminoacyl-tRNA to D-amino acids and free tRNA molecules, this enzyme counteracts the toxicity associated with the formation of D-aminoacyl-tRNA entities in vivo and helps enforce protein L-homochirality. This is D-aminoacyl-tRNA deacylase from Thermodesulfovibrio yellowstonii (strain ATCC 51303 / DSM 11347 / YP87).